Reading from the N-terminus, the 326-residue chain is Tetraacyldisaccharide 4'-kinase (326 aa).

Residue 52–59 (TLGGAGKT) coordinates ATP.

The protein belongs to the LpxK family.

The catalysed reaction is a lipid A disaccharide + ATP = a lipid IVA + ADP + H(+). Its pathway is glycolipid biosynthesis; lipid IV(A) biosynthesis; lipid IV(A) from (3R)-3-hydroxytetradecanoyl-[acyl-carrier-protein] and UDP-N-acetyl-alpha-D-glucosamine: step 6/6. Its function is as follows. Transfers the gamma-phosphate of ATP to the 4'-position of a tetraacyldisaccharide 1-phosphate intermediate (termed DS-1-P) to form tetraacyldisaccharide 1,4'-bis-phosphate (lipid IVA). In Methylobacterium radiotolerans (strain ATCC 27329 / DSM 1819 / JCM 2831 / NBRC 15690 / NCIMB 10815 / 0-1), this protein is Tetraacyldisaccharide 4'-kinase.